Reading from the N-terminus, the 119-residue chain is Gibberellin-regulated protein 9 (119 aa).

Positions 1–24 (MKKMNVVAFVTLIISFLLLSQVLA) are cleaved as a signal peptide.

It belongs to the GASA family. In terms of processing, six disulfide bonds may be present.

It localises to the secreted. Gibberellin-regulated protein that may function in hormonal controlled steps of development such as seed germination, flowering and seed maturation. This is Gibberellin-regulated protein 9 (GASA9) from Arabidopsis thaliana (Mouse-ear cress).